The sequence spans 416 residues: UDP-N-acetylglucosamine 1-carboxyvinyltransferase (416 aa).

22–23 serves as a coordination point for phosphoenolpyruvate; that stretch reads KN. UDP-N-acetyl-alpha-D-glucosamine is bound at residue Arg92. The active-site Proton donor is Cys116. A 2-(S-cysteinyl)pyruvic acid O-phosphothioketal modification is found at Cys116. Residues 121 to 125, Asp304, and Ile326 contribute to the UDP-N-acetyl-alpha-D-glucosamine site; that span reads RPVDQ.

Belongs to the EPSP synthase family. MurA subfamily.

It is found in the cytoplasm. The catalysed reaction is phosphoenolpyruvate + UDP-N-acetyl-alpha-D-glucosamine = UDP-N-acetyl-3-O-(1-carboxyvinyl)-alpha-D-glucosamine + phosphate. It participates in cell wall biogenesis; peptidoglycan biosynthesis. Cell wall formation. Adds enolpyruvyl to UDP-N-acetylglucosamine. In Cupriavidus necator (strain ATCC 17699 / DSM 428 / KCTC 22496 / NCIMB 10442 / H16 / Stanier 337) (Ralstonia eutropha), this protein is UDP-N-acetylglucosamine 1-carboxyvinyltransferase.